The primary structure comprises 81 residues: Cytotoxin 1b (81 aa).

The N-terminal stretch at Met-1 to Thr-21 is a signal peptide. 4 disulfides stabilise this stretch: Cys-24–Cys-42, Cys-35–Cys-59, Cys-63–Cys-74, and Cys-75–Cys-80.

Belongs to the three-finger toxin family. Short-chain subfamily. Type IA cytotoxin sub-subfamily. In terms of assembly, monomer in solution; Homodimer and oligomer in the presence of negatively charged lipids forming a pore with a size ranging between 20 and 30 Angstroms. In terms of tissue distribution, expressed by the venom gland.

The protein localises to the secreted. Its subcellular location is the target cell membrane. Shows cytolytic activity on many different cells by forming pore in lipid membranes. In vivo, increases heart rate or kills the animal by cardiac arrest. In addition, it binds to heparin with high affinity, interacts with Kv channel-interacting protein 1 (KCNIP1) in a calcium-independent manner, and binds to integrin alpha-V/beta-3 (ITGAV/ITGB3) with moderate affinity. The polypeptide is Cytotoxin 1b (Naja atra (Chinese cobra)).